We begin with the raw amino-acid sequence, 807 residues long: Oxysterol-binding protein 1 (807 aa).

N-acetylalanine is present on Ala-2. The tract at residues 61-86 (GAGGVAAAGPAPAPPTGGSGGSGAGG) is disordered. Residues 77 to 86 (GGSGGSGAGG) are compositionally biased toward gly residues. The PH domain maps to 88–181 (GSAREGWLFK…WVTALELAKA (94 aa)). 117 to 122 (LSYYRS) is an a 1,2-diacyl-sn-glycero-3-phospho-(1D-myo-inositol 4-phosphate) binding site. A phosphoserine mark is found at Ser-190, Ser-193, Ser-198, Ser-238, and Ser-240. The stretch at 291–326 (QKSLQYERDQRIRLEETLEQLAKQHNHLERAFRGAT) forms a coiled coil. 20-hydroxycholesterol is bound at residue Gln-314. Residue Gln-314 participates in 25-hydroxycholesterol binding. Position 314 (Gln-314) interacts with 7beta-hydroxycholesterol. Gln-314 is a cholesterol binding site. Gln-314 contacts ergosterol. Residues 329-353 (PANTPGNVGSGKDQCCSGKGDMSDE) form a disordered region. Phosphoserine is present on residues Ser-338, Ser-345, and Ser-351. Positions 358 to 364 (EFFDAPE) match the FFAT motif. The residue at position 377 (Thr-377) is a Phosphothreonine. Residues Ser-379, Ser-382, Ser-385, Ser-386, and Ser-389 each carry the phosphoserine modification. A 1,2-diacyl-sn-glycero-3-phospho-(1D-myo-inositol 4-phosphate)-binding positions include 493–496 (KPFN) and 522–523 (HH). Residues 710 to 759 (TAPTDSRLRPDQRLMENGRWDEANAEKQRLEEKQRLSRKKREAEAMKATE) are disordered. A compositionally biased stretch (basic and acidic residues) spans 715–759 (SRLRPDQRLMENGRWDEANAEKQRLEEKQRLSRKKREAEAMKATE). Residues 730–760 (DEANAEKQRLEEKQRLSRKKREAEAMKATED) adopt a coiled-coil conformation.

Belongs to the OSBP family. As to quaternary structure, homodimer or homotrimer. Interacts (via FFAT motif) with VAPA. Interacts (via C-terminus) with RELCH (via the third HEAT repeat). Found in a complex composed of RELCH, OSBP1 and RAB11A. In terms of tissue distribution, widely expressed.

The protein localises to the cytoplasm. Its subcellular location is the cytosol. It is found in the perinuclear region. The protein resides in the golgi apparatus membrane. It localises to the endoplasmic reticulum membrane. The protein localises to the golgi apparatus. Its subcellular location is the trans-Golgi network. Its function is as follows. Lipid transporter involved in lipid countertransport between the Golgi complex and membranes of the endoplasmic reticulum: specifically exchanges sterol with phosphatidylinositol 4-phosphate (PI4P), delivering sterol to the Golgi in exchange for PI4P, which is degraded by the SAC1/SACM1L phosphatase in the endoplasmic reticulum. Binds cholesterol and a range of oxysterols including 25-hydroxycholesterol. Cholesterol binding promotes the formation of a complex with PP2A and a tyrosine phosphatase which dephosphorylates ERK1/2, whereas 25-hydroxycholesterol causes its disassembly. Regulates cholesterol efflux by decreasing ABCA1 stability. The chain is Oxysterol-binding protein 1 from Homo sapiens (Human).